The sequence spans 106 residues: MVNVPKTRRTYCKGKACKKHTPHKVTQYKKGKDSIFAQGKRRYDRKQSGYGGQTKPVFHKKAKTTKKVVLRLECSVCKYKMQMTLKRCKHFELGGDKKTKGAAISF.

Positions 36 to 56 (FAQGKRRYDRKQSGYGGQTKP) are disordered.

The protein belongs to the eukaryotic ribosomal protein eL42 family.

This Phaffia rhodozyma (Yeast) protein is Large ribosomal subunit protein eL42 (RPL44).